The primary structure comprises 271 residues: Peroxisomal biogenesis factor 2 (271 aa).

The Peroxisomal matrix portion of the chain corresponds to 1–2; sequence MS. Residues 3–29 traverse the membrane as a helical segment; the sequence is RVAQLDSIALDKELYGQFWSEFNAAFN. Residues 30 to 33 lie on the Cytoplasmic side of the membrane; that stretch reads TSEH. The chain crosses the membrane as a helical span at residues 34 to 60; the sequence is KEEWELALNTVVFMCATRFLPHYGSSC. The Peroxisomal matrix portion of the chain corresponds to 61 to 77; that stretch reads TYGSALSGVVFQCRKRT. A helical membrane pass occupies residues 78–97; sequence LYVVTVLAGYVWKKITHIIF. Over 98–101 the chain is Cytoplasmic; sequence NGPH. The chain crosses the membrane as a helical span at residues 102 to 133; that stretch reads CGNQMMWLKLYKWVNLLYHGCDVTNFLRFLAA. Topologically, residues 134–175 are peroxisomal matrix; sequence EGPNARAFLSPLYRAFNVHSTRLIRDGSAIASEFYSNSVFAG. The chain crosses the membrane as a helical span at residues 176–197; sequence LEYQNRQLLWNALLELFSNTLL. At 198 to 271 the chain is on the cytoplasmic side; the sequence is TKRGLLTFVK…SGRLTASPVY (74 aa). Residues C222, C225, C237, C238, C243, C246, C256, and C259 each coordinate Zn(2+). The RING-type zinc-finger motif lies at 222-259; the sequence is CPRCGGFPTNPYQIACCRANYCYVCVVKALEWSMCDAC.

This sequence belongs to the pex2/pex10/pex12 family. Component of the PEX2-PEX10-PEX12 retrotranslocation channel, composed of PEX2, PEX10 and PEX12.

It is found in the peroxisome membrane. The enzyme catalyses [E2 ubiquitin-conjugating enzyme]-S-ubiquitinyl-L-cysteine + [acceptor protein]-L-cysteine = [E2 ubiquitin-conjugating enzyme]-L-cysteine + [acceptor protein]-S-ubiquitinyl-L-cysteine.. It functions in the pathway protein modification; protein ubiquitination. Its function is as follows. E3 ubiquitin-protein ligase component of a retrotranslocation channel required for peroxisome organization by mediating export of the PEX5 receptor from peroxisomes to the cytosol, thereby promoting PEX5 recycling. The retrotranslocation channel is composed of PEX2, PEX10 and PEX12; each subunit contributing transmembrane segments that coassemble into an open channel that specifically allows the passage of PEX5 through the peroxisomal membrane. PEX2 also regulates peroxisome organization by acting as a E3 ubiquitin-protein ligase. PEX2 ubiquitinates PEX5 during its passage through the retrotranslocation channel: catalyzes monoubiquitination of PEX5 at 'Cys-6', a modification that acts as a signal for PEX5 extraction into the cytosol. This is Peroxisomal biogenesis factor 2 from Saccharomyces cerevisiae (strain ATCC 204508 / S288c) (Baker's yeast).